The chain runs to 330 residues: T-cell surface glycoprotein CD1b4 (330 aa).

The N-terminal stretch at 1 to 15 (MLLLALAFFFPAGDT) is a signal peptide. The Extracellular portion of the chain corresponds to 16 to 299 (QNVLPGKISF…LYWGHSISIG (284 aa)). N-linked (GlcNAc...) asparagine glycans are attached at residues Asn-35, Asn-72, and Asn-143. 2 disulfide bridges follow: Cys-117–Cys-181 and Cys-221–Cys-276. Residues 182–292 (PRYLMSVIEA…LEGQDIILYW (111 aa)) enclose the Ig-like domain. A helical transmembrane segment spans residues 300–320 (WIILAVLVPCLIVLVLFILWF). At 321 to 330 (YRRWSYEDIF) the chain is on the cytoplasmic side. Positions 326-329 (YEDI) match the Internalization signal motif.

In terms of assembly, heterodimer with B2M (beta-2-microglobulin). Interacts with saposin C.

Its subcellular location is the cell membrane. It is found in the endosome membrane. The protein resides in the lysosome membrane. Functionally, antigen-presenting protein that binds self and non-self lipid and glycolipid antigens and presents them to T-cell receptors on natural killer T-cells. The chain is T-cell surface glycoprotein CD1b4 (CD1B4) from Cavia porcellus (Guinea pig).